We begin with the raw amino-acid sequence, 238 residues long: uncharacterized protein (238 aa).

The next 4 membrane-spanning stretches (helical) occupy residues 13 to 33 (TLFFIYFVFLTSFCLCFFGII), 40 to 60 (GSVGQLIAKLVVIVVLTLILG), 107 to 127 (VVLILSLVLTYYLSIYAFCQV), and 140 to 160 (VISLIILIFFLSLSFFVPMAF). 2 consecutive 4Fe-4S ferredoxin-type domains span residues 178–208 (PFFQLKTNNNCVKCKLCEFKCPMQIKITEKL) and 204–233 (ITEKLDQKECIRCFECKSSCKKDALSFSYA). Residues Cys-188, Cys-191, Cys-194, Cys-198, Cys-213, Cys-216, Cys-219, and Cys-223 each coordinate [4Fe-4S] cluster.

The protein resides in the cell membrane. This is an uncharacterized protein from Methanocaldococcus jannaschii (strain ATCC 43067 / DSM 2661 / JAL-1 / JCM 10045 / NBRC 100440) (Methanococcus jannaschii).